A 403-amino-acid chain; its full sequence is Stearoyl-[acyl-carrier-protein] 9-desaturase 4, chloroplastic (403 aa).

The N-terminal 44 residues, Met-1–Val-44, are a transit peptide targeting the chloroplast. Residues Glu-140, Glu-178, His-181, Glu-231, Glu-264, and His-267 each coordinate Fe cation.

Belongs to the fatty acid desaturase type 2 family. Homodimer. Fe(2+) is required as a cofactor. In terms of tissue distribution, preferentially expressed in roots.

It localises to the plastid. The protein localises to the chloroplast. The catalysed reaction is octadecanoyl-[ACP] + 2 reduced [2Fe-2S]-[ferredoxin] + O2 + 2 H(+) = (9Z)-octadecenoyl-[ACP] + 2 oxidized [2Fe-2S]-[ferredoxin] + 2 H2O. The protein operates within lipid metabolism; fatty acid metabolism. Functionally, converts stearoyl-ACP to oleoyl-ACP by introduction of a cis double bond between carbons 9 and 10 of the acyl chain. The polypeptide is Stearoyl-[acyl-carrier-protein] 9-desaturase 4, chloroplastic (S-ACP-DES4) (Arabidopsis thaliana (Mouse-ear cress)).